A 107-amino-acid polypeptide reads, in one-letter code: Nucleoid-associated protein RT0857 (107 aa).

It belongs to the YbaB/EbfC family. Homodimer.

The protein localises to the cytoplasm. The protein resides in the nucleoid. In terms of biological role, binds to DNA and alters its conformation. May be involved in regulation of gene expression, nucleoid organization and DNA protection. The sequence is that of Nucleoid-associated protein RT0857 from Rickettsia typhi (strain ATCC VR-144 / Wilmington).